A 563-amino-acid polypeptide reads, in one-letter code: Eukaryotic translation initiation factor 3 subunit D-1 (563 aa).

A disordered region spans residues 98–167 (VQKPPHQRGR…GPPPKMRESS (70 aa)). Residues 100-121 (KPPHQRGRFRNMRNSRSGRGRN) show a composition bias toward basic residues. Threonine 128 is subject to Phosphothreonine. The interval 291–305 (EFDLLTVNESSVEPP) is RNA gate.

Belongs to the eIF-3 subunit D family. As to quaternary structure, component of the eukaryotic translation initiation factor 3 (eIF-3) complex. The eIF-3 complex interacts with pix.

The protein localises to the cytoplasm. In terms of biological role, mRNA cap-binding component of the eukaryotic translation initiation factor 3 (eIF-3) complex, which is involved in protein synthesis of a specialized repertoire of mRNAs and, together with other initiation factors, stimulates binding of mRNA and methionyl-tRNAi to the 40S ribosome. The eIF-3 complex specifically targets and initiates translation of a subset of mRNAs involved in cell proliferation. In the eIF-3 complex, eif3d specifically recognizes and binds the 7-methylguanosine cap of a subset of mRNAs. This Drosophila grimshawi (Hawaiian fruit fly) protein is Eukaryotic translation initiation factor 3 subunit D-1.